Consider the following 471-residue polypeptide: Argininosuccinate lyase (471 aa).

Belongs to the lyase 1 family. Argininosuccinate lyase subfamily.

It is found in the cytoplasm. The enzyme catalyses 2-(N(omega)-L-arginino)succinate = fumarate + L-arginine. Its pathway is amino-acid biosynthesis; L-arginine biosynthesis; L-arginine from L-ornithine and carbamoyl phosphate: step 3/3. In Cereibacter sphaeroides (strain ATCC 17025 / ATH 2.4.3) (Rhodobacter sphaeroides), this protein is Argininosuccinate lyase.